Consider the following 103-residue polypeptide: Cell division protein FtsB (103 aa).

At 1–3 (MGK) the chain is on the cytoplasmic side. Residues 4-21 (LTLLLLAILVWLQYSLWF) form a helical membrane-spanning segment. At 22–103 (GKNGIHDYTR…RAQSAGQNNR (82 aa)) the chain is on the periplasmic side. A coiled-coil region spans residues 31-71 (RVNNDVAAQQATNAKLKARNDQLFAEIDDLNGGQEALEERA).

This sequence belongs to the FtsB family. Part of a complex composed of FtsB, FtsL and FtsQ.

Its subcellular location is the cell inner membrane. Its function is as follows. Essential cell division protein. May link together the upstream cell division proteins, which are predominantly cytoplasmic, with the downstream cell division proteins, which are predominantly periplasmic. The sequence is that of Cell division protein FtsB from Escherichia coli O81 (strain ED1a).